Consider the following 442-residue polypeptide: Putative amino acid transporter YuiF (442 aa).

A run of 11 helical transmembrane segments spans residues 21–41 (IVIA…LGLG), 51–71 (LGGN…AAAL), 103–123 (LIVL…PVHI), 146–166 (LIAC…PVGF), 190–210 (IPYA…LSVI), 236–256 (IGIA…LSQT), 259–279 (VEGM…SGVM), 292–312 (MVLM…SNVL), 335–355 (LGAL…GSSF), 364–384 (IFVP…AIIG), and 421–441 (VPTF…AALV).

It localises to the cell membrane. The chain is Putative amino acid transporter YuiF (yuiF) from Bacillus subtilis (strain 168).